Consider the following 290-residue polypeptide: Bifunctional protein FolD 1 (290 aa).

Residues 172 to 174 and Ile-238 each bind NADP(+); that span reads GAS.

Belongs to the tetrahydrofolate dehydrogenase/cyclohydrolase family. As to quaternary structure, homodimer.

It carries out the reaction (6R)-5,10-methylene-5,6,7,8-tetrahydrofolate + NADP(+) = (6R)-5,10-methenyltetrahydrofolate + NADPH. The catalysed reaction is (6R)-5,10-methenyltetrahydrofolate + H2O = (6R)-10-formyltetrahydrofolate + H(+). The protein operates within one-carbon metabolism; tetrahydrofolate interconversion. Functionally, catalyzes the oxidation of 5,10-methylenetetrahydrofolate to 5,10-methenyltetrahydrofolate and then the hydrolysis of 5,10-methenyltetrahydrofolate to 10-formyltetrahydrofolate. The polypeptide is Bifunctional protein FolD 1 (Pseudomonas putida (strain GB-1)).